Consider the following 215-residue polypeptide: Nascent polypeptide-associated complex subunit alpha (215 aa).

The segment at M1–S81 is disordered. Polar residues predominate over residues V9–E28. Over residues S29–D42 the composition is skewed to acidic residues. S43 is subject to Phosphoserine; by ILK1. Over residues T44 to A57 the composition is skewed to low complexity. Positions Q69–M80 are required for DNA-binding. The NAC-A/B domain occupies S70 to A135. Residues R93–K108 form an RNA/DNA-binding region. At S132 the chain carries Phosphoserine. K142 bears the N6-acetyllysine; alternate mark. A Glycyl lysine isopeptide (Lys-Gly) (interchain with G-Cter in SUMO2); alternate cross-link involves residue K142. T159 carries the post-translational modification Phosphothreonine; by GSK3-beta. Phosphothreonine is present on T161. Phosphoserine occurs at positions 166, 186, 191, and 203. Positions V176–L213 constitute a UBA domain.

Belongs to the NAC-alpha family. As to quaternary structure, interacts with TBP and JUN. Part of the nascent polypeptide-associated complex (NAC), which is a heterodimer of NACA and BTF3 (via NAC-A/B domains). NAC associates with ribosomes through the BTF3/NACB subunit and contacts the ribosomal protein L23, which is positioned near the exiting site. Both subunits can contact nascent polypeptide chains. NACA may also form homodimers, and only this form binds DNA. In terms of processing, phosphorylation of Thr-159 by GSK3B may promote proteasome mediated degradation. Phosphorylation of Ser-43 by ILK during cell adhesion may promote nuclear localization. In terms of tissue distribution, ubiquitously expressed.

The protein localises to the cytoplasm. It localises to the nucleus. Functionally, prevents inappropriate targeting of non-secretory polypeptides to the endoplasmic reticulum (ER). Binds to nascent polypeptide chains as they emerge from the ribosome and blocks their interaction with the signal recognition particle (SRP), which normally targets nascent secretory peptides to the ER. Also reduces the inherent affinity of ribosomes for protein translocation sites in the ER membrane (M sites). May act as a specific coactivator for JUN, binding to DNA and stabilizing the interaction of JUN homodimers with target gene promoters. The protein is Nascent polypeptide-associated complex subunit alpha (NACA) of Homo sapiens (Human).